We begin with the raw amino-acid sequence, 216 residues long: Adenylate kinase (216 aa).

ATP is bound at residue 11–16 (GSGKGT). Residues 31-60 (ATGDLFRKAIECGDELGDTVKSYMERGELV) form an NMP region. AMP contacts are provided by residues T32, R37, 58 to 60 (ELV), 86 to 89 (GFPR), and Q93. Residues 127–163 (GRWVCRSCQSPYQSGCAEVTKGKCSRCQGGLYQRPDD) form an LID region. Residue R128 participates in ATP binding. Zn(2+)-binding residues include C131, C134, C150, and C153. AMP-binding residues include R160 and R171. A199 is a binding site for ATP.

The protein belongs to the adenylate kinase family. Monomer.

The protein localises to the cytoplasm. It carries out the reaction AMP + ATP = 2 ADP. The protein operates within purine metabolism; AMP biosynthesis via salvage pathway; AMP from ADP: step 1/1. Catalyzes the reversible transfer of the terminal phosphate group between ATP and AMP. Plays an important role in cellular energy homeostasis and in adenine nucleotide metabolism. The polypeptide is Adenylate kinase (Dehalococcoides mccartyi (strain CBDB1)).